We begin with the raw amino-acid sequence, 571 residues long: Proline--tRNA ligase (571 aa).

It belongs to the class-II aminoacyl-tRNA synthetase family. ProS type 1 subfamily. In terms of assembly, homodimer.

It is found in the cytoplasm. It catalyses the reaction tRNA(Pro) + L-proline + ATP = L-prolyl-tRNA(Pro) + AMP + diphosphate. Catalyzes the attachment of proline to tRNA(Pro) in a two-step reaction: proline is first activated by ATP to form Pro-AMP and then transferred to the acceptor end of tRNA(Pro). As ProRS can inadvertently accommodate and process non-cognate amino acids such as alanine and cysteine, to avoid such errors it has two additional distinct editing activities against alanine. One activity is designated as 'pretransfer' editing and involves the tRNA(Pro)-independent hydrolysis of activated Ala-AMP. The other activity is designated 'posttransfer' editing and involves deacylation of mischarged Ala-tRNA(Pro). The misacylated Cys-tRNA(Pro) is not edited by ProRS. This chain is Proline--tRNA ligase, found in Acinetobacter baumannii (strain AB307-0294).